The chain runs to 286 residues: uncharacterized protein (286 aa).

Residues 26–268 enclose the AB hydrolase-1 domain; that stretch reads PLIILCHGFC…DACHYDIYEG (243 aa).

It to E.coli YcjY.

This is an uncharacterized protein from Escherichia coli.